The chain runs to 201 residues: ADP-ribosylation factor-related protein 1 (201 aa).

Methionine 1 is subject to N-acetylmethionine. GTP-binding positions include glycine 24 to threonine 31, aspartate 75 to glutamine 79, and asparagine 134 to aspartate 137.

It belongs to the small GTPase superfamily. Arf family. Interacts with SYS1.

It is found in the golgi apparatus. Its subcellular location is the trans-Golgi network. Trans-Golgi-associated GTPase that regulates protein sorting. Controls the targeting of ARL1 and its effector to the trans-Golgi. Required for the lipidation of chylomicrons in the intestine and required for VLDL lipidation in the liver. In Pongo abelii (Sumatran orangutan), this protein is ADP-ribosylation factor-related protein 1 (ARFRP1).